The chain runs to 161 residues: Epithelial membrane protein 2 (161 aa).

4 helical membrane passes run 1-21 (MLVI…LLFI), 67-87 (TMIL…LQLF), 95-115 (FVFT…GASI), and 137-157 (FVVA…YLVL).

This sequence belongs to the PMP-22/EMP/MP20 family. Expressed in the arches, orbits, pectoral fins, vessels, pronephric renal tubules, and glomeruli.

The protein localises to the golgi apparatus membrane. It is found in the cell membrane. It localises to the apical cell membrane. The protein resides in the membrane raft. Its subcellular location is the cytoplasm. The protein localises to the nucleus. It is found in the perinuclear region. Functions as a key regulator of cell membrane composition by regulating protein surface expression. Also, plays a role in regulation of processes including cell migration, cell proliferation, cell contraction and cell adhesion. May play a role in glomerular filtration. The sequence is that of Epithelial membrane protein 2 (emp2) from Danio rerio (Zebrafish).